The sequence spans 173 residues: Crossover junction endodeoxyribonuclease RuvC (173 aa).

Residues Asp-8, Glu-67, and Asp-139 contribute to the active site. Residues Asp-8, Glu-67, and Asp-139 each contribute to the Mg(2+) site.

The protein belongs to the RuvC family. Homodimer which binds Holliday junction (HJ) DNA. The HJ becomes 2-fold symmetrical on binding to RuvC with unstacked arms; it has a different conformation from HJ DNA in complex with RuvA. In the full resolvosome a probable DNA-RuvA(4)-RuvB(12)-RuvC(2) complex forms which resolves the HJ. Requires Mg(2+) as cofactor.

It is found in the cytoplasm. The enzyme catalyses Endonucleolytic cleavage at a junction such as a reciprocal single-stranded crossover between two homologous DNA duplexes (Holliday junction).. Its function is as follows. The RuvA-RuvB-RuvC complex processes Holliday junction (HJ) DNA during genetic recombination and DNA repair. Endonuclease that resolves HJ intermediates. Cleaves cruciform DNA by making single-stranded nicks across the HJ at symmetrical positions within the homologous arms, yielding a 5'-phosphate and a 3'-hydroxyl group; requires a central core of homology in the junction. The consensus cleavage sequence is 5'-(A/T)TT(C/G)-3'. Cleavage occurs on the 3'-side of the TT dinucleotide at the point of strand exchange. HJ branch migration catalyzed by RuvA-RuvB allows RuvC to scan DNA until it finds its consensus sequence, where it cleaves and resolves the cruciform DNA. This Tolumonas auensis (strain DSM 9187 / NBRC 110442 / TA 4) protein is Crossover junction endodeoxyribonuclease RuvC.